The sequence spans 673 residues: MGFSHGVSKTLKSPKSLSLLRSYYSKFNPYPSIFGLNDHRFGLIKHDYCSNTRKENINPIDLSKYPTERIRNFSIIAHVDHGKSTLADRLLELTGTIKRGHGQPQYLDKLQVERERGITVKAQTATMFHKYNFHGPNIGDAHEPPTFLLNLIDTPGHVDFSYEVSRSLAACQGALLVVDAAQGVQAQTVANFYLAFESNLTVIPVINKIDQPTADPDRVKAQLKSMFDLEPSDCLLTSAKTGQGLEQVLPAVIERIPSPPGYSNSPLRMLLLDSYYDEYKGVICHVAVVDGMLRKGDKISSAATGHSYEILDVGFMHPELTPTGILLTGQVGYVVSGMRSTKEARVGDTLYHSRTSVEPLPGFKPAKHMVFSGLYPADGSDFDALNHAIERLTCNDASVSVTKESSSALGLGFRCGFLGLLHMDVFHQRLEQEYGAHVISTVPTVPYIFEYSDGSKVQVQNPAALPSNPKKRVTASWEPTVVATIIIPSEYVGPVITLCSERRGQQLEYSFIDSQRAFMKYRLPLREIVVDFYNELKSITSGYASFDYEDSEYQEAELVKLDILLNGQPVDAMATIVHNLKAQRVGRELVDKLKKFIDRQMFEITIQAAIGSKVVARETISAMRKNVLAKCYGGDVTRKRKLLEKQKEGKKRMKRVGSVDIPQEAFHELLKVS.

The tr-type G domain occupies 68–260 (ERIRNFSIIA…AVIERIPSPP (193 aa)). GTP contacts are provided by residues 77–84 (AHVDHGKS), 153–157 (DTPGH), and 207–210 (NKID).

The protein belongs to the TRAFAC class translation factor GTPase superfamily. Classic translation factor GTPase family. LepA subfamily.

The protein resides in the mitochondrion inner membrane. It catalyses the reaction GTP + H2O = GDP + phosphate + H(+). Promotes mitochondrial protein synthesis. May act as a fidelity factor of the translation reaction, by catalyzing a one-codon backward translocation of tRNAs on improperly translocated ribosomes. Binds to mitochondrial ribosomes in a GTP-dependent manner. This Ricinus communis (Castor bean) protein is Translation factor GUF1 homolog, mitochondrial.